The sequence spans 376 residues: Lipoprotein p33 (376 aa).

An N-terminal signal peptide occupies residues Met-1 to Ser-30. Cys-31 carries the N-palmitoyl cysteine lipid modification. Residue Cys-31 is the site of S-diacylglycerol cysteine attachment. The segment at Ser-33–Thr-59 is disordered. Gly residues predominate over residues Gly-38 to Gly-51.

The protein belongs to the p35 lipoprotein family.

It is found in the cell membrane. In Malacoplasma penetrans (strain HF-2) (Mycoplasma penetrans), this protein is Lipoprotein p33.